Consider the following 499-residue polypeptide: T-cell activation inhibitor, mitochondrial (499 aa).

The stretch at 206-233 (LRNSLPLRKELDRLKNELSELLQLSDIR) forms a coiled coil.

Expressed in peripheral blood leukocytes, mainly in T-lymphocytes.

Its subcellular location is the mitochondrion. In terms of biological role, may regulate T-cell apoptosis. The protein is T-cell activation inhibitor, mitochondrial (TCAIM) of Mus musculus (Mouse).